A 424-amino-acid polypeptide reads, in one-letter code: Phosphoribosylamine--glycine ligase (424 aa).

The 207-residue stretch at lysine 107–glutamate 313 folds into the ATP-grasp domain. Position 133–194 (valine 133–serine 194) interacts with ATP. Residues glutamate 283 and asparagine 285 each contribute to the Mg(2+) site.

Belongs to the GARS family. It depends on Mg(2+) as a cofactor. Requires Mn(2+) as cofactor.

It catalyses the reaction 5-phospho-beta-D-ribosylamine + glycine + ATP = N(1)-(5-phospho-beta-D-ribosyl)glycinamide + ADP + phosphate + H(+). It functions in the pathway purine metabolism; IMP biosynthesis via de novo pathway; N(1)-(5-phospho-D-ribosyl)glycinamide from 5-phospho-alpha-D-ribose 1-diphosphate: step 2/2. The chain is Phosphoribosylamine--glycine ligase from Aquifex aeolicus (strain VF5).